Reading from the N-terminus, the 337-residue chain is Perakine reductase (337 aa).

Tyr57 serves as the catalytic Proton donor. His126 contacts substrate. 205-214 lines the NADP(+) pocket; it reads SPIGRGLFAG.

The protein belongs to the aldo/keto reductase family.

The enzyme catalyses raucaffrinoline + NADP(+) = perakine + NADPH + H(+). Its function is as follows. Aldo-keto reductase involved in the biosynthesis of monoterpenoid indole alkaloids. Broad substrate specificity enzyme with a high selectivity in the group of alkaloids. Can use perakine, 19(S),20(R)-dihydro-peraksine-17,21-al, cinnamic aldehyde, p-coumaric aldehyde and 3-(3,4,5-trimethoxyphenyl)propanal as substrates, but not ketosteroids such as progesterone. NADPH could not be replaced by NADH. This Rauvolfia serpentina (Serpentine wood) protein is Perakine reductase (PR).